The sequence spans 133 residues: Mediator of RNA polymerase II transcription subunit 10 (133 aa).

The protein belongs to the Mediator complex subunit 10 family. Component of the Mediator complex. Interacts with MED4 and MED21.

The protein localises to the nucleus. Functionally, component of the Mediator complex, a coactivator involved in the regulated transcription of nearly all RNA polymerase II-dependent genes. Mediator functions as a bridge to convey information from gene-specific regulatory proteins to the basal RNA polymerase II transcription machinery. Mediator is recruited to promoters by direct interactions with regulatory proteins and serves as a scaffold for the assembly of a functional preinitiation complex with RNA polymerase II and the general transcription factors. Required for activated transcription of the MtnA, MtnB and MtnD genes. The chain is Mediator of RNA polymerase II transcription subunit 10 (MED10) from Drosophila melanogaster (Fruit fly).